The chain runs to 374 residues: Ribosomal RNA large subunit methyltransferase G (374 aa).

This sequence belongs to the methyltransferase superfamily. RlmG family.

It localises to the cytoplasm. The catalysed reaction is guanosine(1835) in 23S rRNA + S-adenosyl-L-methionine = N(2)-methylguanosine(1835) in 23S rRNA + S-adenosyl-L-homocysteine + H(+). Its function is as follows. Specifically methylates the guanine in position 1835 (m2G1835) of 23S rRNA. This Pseudomonas savastanoi pv. phaseolicola (strain 1448A / Race 6) (Pseudomonas syringae pv. phaseolicola (strain 1448A / Race 6)) protein is Ribosomal RNA large subunit methyltransferase G.